The chain runs to 444 residues: N-succinylarginine dihydrolase (444 aa).

Substrate-binding positions include 19–28 (AGLSFGNVAS), Asn110, and 137–138 (HR). The active site involves Glu174. Arg214 is a binding site for substrate. Residue His250 is part of the active site. Positions 252 and 362 each coordinate substrate. Cys368 acts as the Nucleophile in catalysis.

It belongs to the succinylarginine dihydrolase family. Homodimer.

The catalysed reaction is N(2)-succinyl-L-arginine + 2 H2O + 2 H(+) = N(2)-succinyl-L-ornithine + 2 NH4(+) + CO2. The protein operates within amino-acid degradation; L-arginine degradation via AST pathway; L-glutamate and succinate from L-arginine: step 2/5. Functionally, catalyzes the hydrolysis of N(2)-succinylarginine into N(2)-succinylornithine, ammonia and CO(2). The chain is N-succinylarginine dihydrolase from Shewanella baltica (strain OS155 / ATCC BAA-1091).